The sequence spans 730 residues: Sodium-dependent neutral amino acid transporter B(0)AT2 (730 aa).

The disordered stretch occupies residues 1-24 (MPKNSKVVKRELDDDVTESVKDLL). Residues 1–70 (MPKNSKVVKR…RPAWSSKLQY (70 aa)) are Extracellular-facing. Residues Ser-25 and Ser-55 each carry the phosphoserine modification. 3 helical membrane passes run 71 to 91 (ILAQ…PYLC), 97 to 117 (GAYL…LFFL), and 149 to 169 (VVCY…LFYF). The Cytoplasmic segment spans residues 170 to 223 (SQSFQQPLPWDQCPLVKNASHTFVEPECEQSSATTYYWYREALNISSSISESGG). Transmembrane regions (helical) follow at residues 224–244 (LNWK…LAMI) and 253–273 (IIYF…IRAL). An N-linked (GlcNAc...) asparagine glycan is attached at Asn-276. A run of 2 helical transmembrane segments spans residues 302–322 (AATQ…AFSS) and 335–355 (VLVS…VFAV). Over 356-458 (LGFKANVINE…AMTHFPASPF (103 aa)) the chain is Cytoplasmic. 5 helical membrane passes run 459 to 479 (WSVM…FGTI), 494 to 514 (KEIL…IFVQ), 530 to 550 (TLPL…VYGI), 575 to 595 (YVSP…MGLS), and 619 to 639 (LVVC…VFIV). The Extracellular segment spans residues 640–730 (RRFNLIDDSS…IMPDMPESDL (91 aa)). 3 positions are modified to phosphoserine: Ser-687, Ser-699, and Ser-701.

This sequence belongs to the sodium:neurotransmitter symporter (SNF) (TC 2.A.22) family. SLC6A15 subfamily.

The protein localises to the membrane. The catalysed reaction is L-leucine(in) + Na(+)(in) = L-leucine(out) + Na(+)(out). The enzyme catalyses L-isoleucine(in) + Na(+)(in) = L-isoleucine(out) + Na(+)(out). It carries out the reaction L-methionine(in) + Na(+)(in) = L-methionine(out) + Na(+)(out). It catalyses the reaction L-proline(in) + Na(+)(in) = L-proline(out) + Na(+)(out). The catalysed reaction is L-alanine(in) + Na(+)(in) = L-alanine(out) + Na(+)(out). The enzyme catalyses L-asparagine(in) + Na(+)(in) = L-asparagine(out) + Na(+)(out). It carries out the reaction L-valine(in) + Na(+)(in) = L-valine(out) + Na(+)(out). It catalyses the reaction L-cysteine(in) + Na(+)(in) = L-cysteine(out) + Na(+)(out). The catalysed reaction is L-glutamine(in) + Na(+)(in) = L-glutamine(out) + Na(+)(out). The enzyme catalyses L-serine(in) + Na(+)(in) = L-serine(out) + Na(+)(out). It carries out the reaction L-threonine(in) + Na(+)(in) = L-threonine(out) + Na(+)(out). It catalyses the reaction L-pipecolate(in) + Na(+)(in) = L-pipecolate(out) + Na(+)(out). The catalysed reaction is L-phenylalanine(in) + Na(+)(in) = L-phenylalanine(out) + Na(+)(out). Functions as a sodium-dependent neutral amino acid transporter. Exhibits preference for the branched-chain amino acids, particularly leucine, valine and isoleucine and methionine. Can also transport low-affinity substrates such as alanine, phenylalanine, glutamine and pipecolic acid. Mediates the saturable, pH-sensitive and electrogenic cotransport of proline and sodium ions with a stoichiometry of 1:1. May have a role as transporter for neurotransmitter precursors into neurons. In contrast to other members of the neurotransmitter transporter family, does not appear to be chloride-dependent. The protein is Sodium-dependent neutral amino acid transporter B(0)AT2 (SLC6A15) of Pongo abelii (Sumatran orangutan).